Here is a 107-residue protein sequence, read N- to C-terminus: Sperm protamine P1 (107 aa).

Composition is skewed to basic and acidic residues over residues 1–10 (ALRKVDRNRF) and 20–33 (REAKRYKEEEEFPG). The propeptide at 1–35 (ALRKVDRNRFVLDNVTPQPREAKRYKEEEEFPGHG) is removed in mature form. The tract at residues 1–107 (ALRKVDRNRF…RRRRRGKKGK (107 aa)) is disordered. Over residues 34–107 (HGRRRRRRSK…RRRRRGKKGK (74 aa)) the composition is skewed to basic residues. A Phosphoserine modification is found at serine 42.

A series of N-terminal cleavages yield the mature protein. Post-translationally, only the mature protein is phosphorylated. As to expression, gonads.

The protein localises to the nucleus. It is found in the chromosome. Its function is as follows. Protamines substitute for histones in the chromatin of sperm during the haploid phase of spermatogenesis. They compact sperm DNA into a highly condensed, stable and inactive complex. This is Sperm protamine P1 from Bolinus brandaris (Purple dye murex).